We begin with the raw amino-acid sequence, 1244 residues long: Ras-specific guanine nucleotide-releasing factor 2 (1244 aa).

One can recognise a PH 1 domain in the interval 22–129; it reads EGTKRGYLSK…WVEAIQQASY (108 aa). Residues 147–189 are a coiled coil; that stretch reads VQIVETEKVAANQLRTQLEDQDTEIERLKAEIIALNKTKERMR. In terms of domain architecture, IQ spans 201–230; that stretch reads DIKKIKKVQSFMRGWLCRRKWKIIVQDYIC. One can recognise a DH domain in the interval 239 to 425; that stretch reads KRNQIVFNMV…EELSRVMHDE (187 aa). The region spanning 466–584 is the PH 2 domain; sequence PSVERGKLSK…WTSDISQCID (119 aa). Residues 631–745 form the N-terminal Ras-GEF domain; the sequence is KVPQIRYASV…PVRTRKLSLN (115 aa). Disordered stretches follow at residues 704-743, 759-814, and 843-879; these read NRSGDHVNDKSPRLCRKFSSPPPLSISSRTSSPVRTRKLS, TTSS…NAEV, and PESPQASEPGEISPCRSPSTPRHLRYRQSGVQTAENS. Residues 706–715 are compositionally biased toward basic and acidic residues; it reads SGDHVNDKSP. The segment covering 728–743 has biased composition (polar residues); the sequence is SISSRTSSPVRTRKLS. 2 stretches are compositionally biased toward low complexity: residues 759 to 774 and 781 to 806; these read TTSSSAASSPTSANPT and NNNNNSKPPLDLSRGQSPSSPEQSPG. Residues 1009 to 1241 form the Ras-GEF domain; that stretch reads SAMEIAEQIT…YDLSLKIEPR (233 aa).

It is found in the cytoplasm. The protein resides in the cell membrane. It localises to the endoplasmic reticulum membrane. Functions as a calcium-regulated nucleotide exchange factor activating both Ras and rac1 through the exchange of bound GDP for GTP. May function in synaptic plasticity. This Danio rerio (Zebrafish) protein is Ras-specific guanine nucleotide-releasing factor 2 (rasgrf2).